Here is a 130-residue protein sequence, read N- to C-terminus: Small ribosomal subunit protein uS11 (130 aa).

It belongs to the universal ribosomal protein uS11 family. As to quaternary structure, part of the 30S ribosomal subunit. Interacts with proteins S7 and S18. Binds to IF-3.

Located on the platform of the 30S subunit, it bridges several disparate RNA helices of the 16S rRNA. Forms part of the Shine-Dalgarno cleft in the 70S ribosome. The sequence is that of Small ribosomal subunit protein uS11 from Bdellovibrio bacteriovorus (strain ATCC 15356 / DSM 50701 / NCIMB 9529 / HD100).